The chain runs to 501 residues: Adenylosuccinate synthetase 2, chloroplastic (501 aa).

Residues 87–93 and 115–117 each bind GTP; these read GDEGKGK and GHT. Residue D88 is the Proton acceptor of the active site. 2 residues coordinate Mg(2+): D88 and G115. IMP is bound by residues 88-91, 113-116, T205, R219, Q300, T315, and R379; these read DEGK and NAGH. The active-site Proton donor is H116. 375 to 381 serves as a coordination point for substrate; sequence NITGRPR. Residues R381, 407–409, and 490–492 contribute to the GTP site; these read KLD and GIG.

It belongs to the adenylosuccinate synthetase family. As to quaternary structure, homodimer. Mg(2+) is required as a cofactor.

Its subcellular location is the plastid. The protein localises to the chloroplast. It carries out the reaction IMP + L-aspartate + GTP = N(6)-(1,2-dicarboxyethyl)-AMP + GDP + phosphate + 2 H(+). The protein operates within purine metabolism; AMP biosynthesis via de novo pathway; AMP from IMP: step 1/2. Functionally, plays an important role in the de novo pathway and in the salvage pathway of purine nucleotide biosynthesis. Catalyzes the first committed step in the biosynthesis of AMP from IMP. The protein is Adenylosuccinate synthetase 2, chloroplastic of Capsicum frutescens (Cayenne pepper).